The primary structure comprises 197 residues: NADH-quinone oxidoreductase subunit B (197 aa).

Cys76, Cys77, Cys141, and Cys171 together coordinate [4Fe-4S] cluster.

It belongs to the complex I 20 kDa subunit family. As to quaternary structure, NDH-1 is composed of 14 different subunits. Subunits NuoB, C, D, E, F, and G constitute the peripheral sector of the complex. [4Fe-4S] cluster is required as a cofactor.

The protein resides in the cell inner membrane. The enzyme catalyses a quinone + NADH + 5 H(+)(in) = a quinol + NAD(+) + 4 H(+)(out). NDH-1 shuttles electrons from NADH, via FMN and iron-sulfur (Fe-S) centers, to quinones in the respiratory chain. The immediate electron acceptor for the enzyme in this species is believed to be ubiquinone. Couples the redox reaction to proton translocation (for every two electrons transferred, four hydrogen ions are translocated across the cytoplasmic membrane), and thus conserves the redox energy in a proton gradient. This is NADH-quinone oxidoreductase subunit B from Methylobacterium nodulans (strain LMG 21967 / CNCM I-2342 / ORS 2060).